Here is a 66-residue protein sequence, read N- to C-terminus: Large ribosomal subunit protein bL35 (66 aa).

This sequence belongs to the bacterial ribosomal protein bL35 family.

The polypeptide is Large ribosomal subunit protein bL35 (Lysinibacillus sphaericus (strain C3-41)).